The following is a 725-amino-acid chain: Catalase-peroxidase (725 aa).

Residues 99 to 227 constitute a cross-link (tryptophyl-tyrosyl-methioninium (Trp-Tyr) (with M-253)); it reads WHAAGTYRIA…LAAVMMGLIY (129 aa). H100 serves as the catalytic Proton acceptor. Positions 227 to 253 form a cross-link, tryptophyl-tyrosyl-methioninium (Tyr-Met) (with W-99); the sequence is YVNPEGVDGNPDPLKTAHDIRITFSRM. H268 contacts heme b.

This sequence belongs to the peroxidase family. Peroxidase/catalase subfamily. In terms of assembly, homodimer or homotetramer. It depends on heme b as a cofactor. Post-translationally, formation of the three residue Trp-Tyr-Met cross-link is important for the catalase, but not the peroxidase activity of the enzyme.

It catalyses the reaction H2O2 + AH2 = A + 2 H2O. The enzyme catalyses 2 H2O2 = O2 + 2 H2O. In terms of biological role, bifunctional enzyme with both catalase and broad-spectrum peroxidase activity. In Picosynechococcus sp. (strain ATCC 27264 / PCC 7002 / PR-6) (Agmenellum quadruplicatum), this protein is Catalase-peroxidase.